The following is a 239-amino-acid chain: Thymidylate kinase (239 aa).

10–17 is a binding site for ATP; it reads GVNRVGKS.

It belongs to the thymidylate kinase family.

It catalyses the reaction dTMP + ATP = dTDP + ADP. Its pathway is pyrimidine metabolism; dTTP biosynthesis. Functionally, catalyzes the conversion of dTMP to dTDP. The protein is Thymidylate kinase (TMK) of African swine fever virus (isolate Tick/South Africa/Pretoriuskop Pr4/1996) (ASFV).